The primary structure comprises 843 residues: Glycogen phosphorylase, brain form (843 aa).

Residue Ala2 is modified to N-acetylalanine. Ser15 is subject to Phosphoserine; by PHK; in form phosphorylase A. Positions 43, 197, and 310 each coordinate AMP. Tyr197 carries the post-translational modification Phosphotyrosine. Tyr473 carries the post-translational modification Phosphotyrosine. Lys569 contacts pyridoxal 5'-phosphate. The interval 677–678 (TG) is pyridoxal 5'-phosphate. Lys681 is subject to N6-(pyridoxal phosphate)lysine.

It belongs to the glycogen phosphorylase family. Homodimer. Dimers associate into a tetramer to form the enzymatically active phosphorylase A. Pyridoxal 5'-phosphate serves as cofactor. Post-translationally, phosphorylation of Ser-15 converts phosphorylase B (unphosphorylated) to phosphorylase A.

It carries out the reaction [(1-&gt;4)-alpha-D-glucosyl](n) + phosphate = [(1-&gt;4)-alpha-D-glucosyl](n-1) + alpha-D-glucose 1-phosphate. Its activity is regulated as follows. Activity of phosphorylase is controlled both by allosteric means (through the non-covalent binding of metabolites) and by covalent modification. Thus AMP allosterically activates, whereas ATP, ADP, and glucose-6-phosphate allosterically inhibit, phosphorylase B. Functionally, glycogen phosphorylase that regulates glycogen mobilization. Phosphorylase is an important allosteric enzyme in carbohydrate metabolism. Enzymes from different sources differ in their regulatory mechanisms and in their natural substrates. However, all known phosphorylases share catalytic and structural properties. This Ovis aries (Sheep) protein is Glycogen phosphorylase, brain form (PYGB).